The following is a 266-amino-acid chain: Cell division protein FtsQ (266 aa).

Over 1-31 (MRQKTSSNKKKQKNTNNISLRRKLGLMYKKA) the chain is Cytoplasmic. The chain crosses the membrane as a helical span at residues 32–52 (ILGLKIVLMIFVCLFVFTKYF). Over 53–266 (TSIKTYLITN…DRNKYYIQKY (214 aa)) the chain is Periplasmic. The POTRA domain occupies 72–140 (FRLENVIIEG…NTVYIKLFER (69 aa)).

The protein belongs to the FtsQ/DivIB family. FtsQ subfamily.

The protein localises to the cell inner membrane. Its function is as follows. Essential cell division protein. The chain is Cell division protein FtsQ from Rickettsia typhi (strain ATCC VR-144 / Wilmington).